The following is a 510-amino-acid chain: GMP synthase [glutamine-hydrolyzing] (510 aa).

In terms of domain architecture, Glutamine amidotransferase type-1 spans 5 to 195 (KILVLDFGGQ…LFKVCGVKGT (191 aa)). Residue cysteine 82 is the Nucleophile of the active site. Residues histidine 169 and glutamate 171 contribute to the active site. Positions 196-385 (WNMADFINEE…LGLPDEIVWR (190 aa)) constitute a GMPS ATP-PPase domain. An ATP-binding site is contributed by 223-229 (SGGVDSA).

As to quaternary structure, homodimer.

The catalysed reaction is XMP + L-glutamine + ATP + H2O = GMP + L-glutamate + AMP + diphosphate + 2 H(+). The protein operates within purine metabolism; GMP biosynthesis; GMP from XMP (L-Gln route): step 1/1. Catalyzes the synthesis of GMP from XMP. The sequence is that of GMP synthase [glutamine-hydrolyzing] from Halothermothrix orenii (strain H 168 / OCM 544 / DSM 9562).